A 218-amino-acid polypeptide reads, in one-letter code: Transmembrane gamma-carboxyglutamic acid protein 1 (218 aa).

Residues 1–20 (MGRIFLTGEKANSVLKRYPR) constitute a propeptide that is removed on maturation. Residues 20–66 (RANGLFEEIRQGNIERECKEEVCTFEEAREAFENNEKTKEFWNTYTK) form the Gla domain. Residues 21-80 (ANGLFEEIRQGNIERECKEEVCTFEEAREAFENNEKTKEFWNTYTKAQQGESNRGSDWFQ) lie on the Extracellular side of the membrane. A disulfide bond links Cys-37 and Cys-42. Residues 81 to 101 (FYLTFPLIFGLFIILLVIFLI) traverse the membrane as a helical segment. Residues 102–218 (WRCFLRNKTR…AMVPVATTIK (117 aa)) are Cytoplasmic-facing. The tract at residues 160–192 (STRLSNCDPPPTYEEATGQMNLRRSETEPHLDP) is disordered. Residues 182-192 (RRSETEPHLDP) show a composition bias toward basic and acidic residues.

Gla residues are produced after subsequent post-translational modifications of glutamate by a vitamin K-dependent gamma-carboxylase.

Its subcellular location is the membrane. The sequence is that of Transmembrane gamma-carboxyglutamic acid protein 1 (PRRG1) from Bos taurus (Bovine).